A 170-amino-acid polypeptide reads, in one-letter code: Viral interleukin-10 homolog (170 aa).

The N-terminal stretch at 1-23 (MERRLVVTLQCLVLLYLAPECGG) is a signal peptide. Intrachain disulfides connect Cys27-Cys119 and Cys73-Cys125. The stretch at 97-145 (EAKDHVNSLGENLKTLRLRLRRCHRFLPCENKSKAVEQIKNAFNKLQEK) forms a coiled coil. Asn127 carries N-linked (GlcNAc...) asparagine; by host glycosylation.

This sequence belongs to the IL-10 family. In terms of assembly, homodimer.

It is found in the secreted. Inhibits IFN-gamma synthesis. Down-regulates the expression of the host TAP1 gene (transporter associated with antigen processing), thereby affecting the transport of peptides into the endoplasmic reticulum and subsequent peptide loading by MHC class I molecules. In consequence, infected cells are masked for immune recognition by cytotoxic T-lymphocytes. This Epstein-Barr virus (strain AG876) (HHV-4) protein is Viral interleukin-10 homolog.